The primary structure comprises 644 residues: Exoribonuclease 2 (644 aa).

In terms of domain architecture, RNB spans 189–516 (RQDLTALNFV…NHRLLKAVIK (328 aa)). The S1 motif domain maps to 561-643 (NTRFAAEIID…ETRSIIARPA (83 aa)).

Belongs to the RNR ribonuclease family. RNase II subfamily.

The protein localises to the cytoplasm. The catalysed reaction is Exonucleolytic cleavage in the 3'- to 5'-direction to yield nucleoside 5'-phosphates.. Its function is as follows. Involved in mRNA degradation. Hydrolyzes single-stranded polyribonucleotides processively in the 3' to 5' direction. The protein is Exoribonuclease 2 of Salmonella typhi.